We begin with the raw amino-acid sequence, 46 residues long: Toxin PhcrTx2 (46 aa).

Intrachain disulfides connect Cys-4-Cys-40, Cys-6-Cys-32, and Cys-22-Cys-41.

Belongs to the sea anemone type 3 (BDS) potassium channel toxin family.

It localises to the secreted. It is found in the nematocyst. Neurotoxin that induces paralysis (but not death) to U.thayeri crabs. Partially and reversibly inhibits glutamate-evoked peak currents (IC(50)=4.7 uM) but not voltage-gated potassium channel currents in cultured isolated neurons from the land snail H.aspersa. Weakly inhibits voltage-gated potassium peak currents (IC(50)=6.4 uM) and steady-state currents (IC(50)=8.2 uM) in rat dorsal root ganglion (DRG) neurons. Weakly inhibits voltage-gated sodium currents in rat DRG neurons (IC(50)=0.9 uM). In Phymanthus crucifer (Red beaded anemone), this protein is Toxin PhcrTx2.